The following is a 577-amino-acid chain: Eukaryotic translation initiation factor 3 subunit D (577 aa).

The segment at 103-177 (DSTKTRFGRG…KDYDKPQRNR (75 aa)) is disordered. Basic and acidic residues predominate over residues 166-177 (GWKDYDKPQRNR). The RNA gate stretch occupies residues 305–319 (TLDMVTVNENAADAP). The disordered stretch occupies residues 558–577 (GSFEDDGEGDVIEENVEEED). Acidic residues predominate over residues 560-577 (FEDDGEGDVIEENVEEED).

The protein belongs to the eIF-3 subunit D family. Component of the eukaryotic translation initiation factor 3 (eIF-3) complex.

The protein resides in the cytoplasm. Its function is as follows. mRNA cap-binding component of the eukaryotic translation initiation factor 3 (eIF-3) complex, which is involved in protein synthesis of a specialized repertoire of mRNAs and, together with other initiation factors, stimulates binding of mRNA and methionyl-tRNAi to the 40S ribosome. The eIF-3 complex specifically targets and initiates translation of a subset of mRNAs involved in cell proliferation. In the eIF-3 complex, eif3d specifically recognizes and binds the 7-methylguanosine cap of a subset of mRNAs. The polypeptide is Eukaryotic translation initiation factor 3 subunit D (Sclerotinia sclerotiorum (strain ATCC 18683 / 1980 / Ss-1) (White mold)).